Consider the following 120-residue polypeptide: UPF0102 protein FRAAL5785 (120 aa).

This sequence belongs to the UPF0102 family.

The chain is UPF0102 protein FRAAL5785 from Frankia alni (strain DSM 45986 / CECT 9034 / ACN14a).